The following is a 323-amino-acid chain: ADP-L-glycero-D-manno-heptose-6-epimerase (323 aa).

Residues 10–11, 31–32, K38, R53, 75–79, and N92 each bind NADP(+); these read FI, DN, and MGACS. The Proton acceptor role is filled by Y143. NADP(+) is bound at residue K147. Substrate is bound at residue N170. V171 and K179 together coordinate NADP(+). Catalysis depends on K179, which acts as the Proton acceptor. Substrate contacts are provided by residues D181, K188, 202–205, R216, and Y281; that span reads FRSC.

Belongs to the NAD(P)-dependent epimerase/dehydratase family. HldD subfamily. In terms of assembly, homopentamer. NADP(+) is required as a cofactor.

It catalyses the reaction ADP-D-glycero-beta-D-manno-heptose = ADP-L-glycero-beta-D-manno-heptose. Its pathway is nucleotide-sugar biosynthesis; ADP-L-glycero-beta-D-manno-heptose biosynthesis; ADP-L-glycero-beta-D-manno-heptose from D-glycero-beta-D-manno-heptose 7-phosphate: step 4/4. Functionally, catalyzes the interconversion between ADP-D-glycero-beta-D-manno-heptose and ADP-L-glycero-beta-D-manno-heptose via an epimerization at carbon 6 of the heptose. This Nitratidesulfovibrio vulgaris (strain ATCC 29579 / DSM 644 / CCUG 34227 / NCIMB 8303 / VKM B-1760 / Hildenborough) (Desulfovibrio vulgaris) protein is ADP-L-glycero-D-manno-heptose-6-epimerase.